Reading from the N-terminus, the 392-residue chain is Succinyl-diaminopimelate desuccinylase (392 aa).

His75 lines the Zn(2+) pocket. Asp77 is a catalytic residue. Asp108 contacts Zn(2+). Residue Glu147 is the Proton acceptor of the active site. Zn(2+) contacts are provided by Glu148, Glu176, and His365.

Belongs to the peptidase M20A family. DapE subfamily. As to quaternary structure, homodimer. The cofactor is Zn(2+). Requires Co(2+) as cofactor.

The enzyme catalyses N-succinyl-(2S,6S)-2,6-diaminopimelate + H2O = (2S,6S)-2,6-diaminopimelate + succinate. It participates in amino-acid biosynthesis; L-lysine biosynthesis via DAP pathway; LL-2,6-diaminopimelate from (S)-tetrahydrodipicolinate (succinylase route): step 3/3. Functionally, catalyzes the hydrolysis of N-succinyl-L,L-diaminopimelic acid (SDAP), forming succinate and LL-2,6-diaminopimelate (DAP), an intermediate involved in the bacterial biosynthesis of lysine and meso-diaminopimelic acid, an essential component of bacterial cell walls. The sequence is that of Succinyl-diaminopimelate desuccinylase from Rhodopseudomonas palustris (strain BisB18).